The sequence spans 204 residues: Recombination protein RecR (204 aa).

The segment at C58–C75 adopts a C4-type zinc-finger fold. Positions S83–P181 constitute a Toprim domain.

It belongs to the RecR family.

Functionally, may play a role in DNA repair. It seems to be involved in an RecBC-independent recombinational process of DNA repair. It may act with RecF and RecO. This is Recombination protein RecR from Chlorobaculum parvum (strain DSM 263 / NCIMB 8327) (Chlorobium vibrioforme subsp. thiosulfatophilum).